Here is a 77-residue protein sequence, read N- to C-terminus: Acyl carrier protein (77 aa).

Positions 4–77 (SETFEKVKKI…TVQAAVDXIN (74 aa)) constitute a Carrier domain. Ser-40 bears the O-(pantetheine 4'-phosphoryl)serine mark.

This sequence belongs to the acyl carrier protein (ACP) family. 4'-phosphopantetheine is transferred from CoA to a specific serine of apo-ACP by AcpS. This modification is essential for activity because fatty acids are bound in thioester linkage to the sulfhydryl of the prosthetic group.

The protein localises to the cytoplasm. The protein operates within lipid metabolism; fatty acid biosynthesis. Carrier of the growing fatty acid chain in fatty acid biosynthesis. This Anabaena variabilis protein is Acyl carrier protein.